Consider the following 216-residue polypeptide: uncharacterized protein (216 aa).

The region spanning 1–216 (MVVKIVEAYE…DVTFLKLKLK (216 aa)) is the N-acetyltransferase domain.

It belongs to the acetyltransferase family.

This is an uncharacterized protein from Dictyostelium discoideum (Social amoeba).